Consider the following 1089-residue polypeptide: MGNTTTKFRKALINGDENLACQIYENNPQLKESLDPNTSYGEPYQHNTPLHYAARHGMNKILGTFLGRDGNPNKRNVHNETSMHLLCMGPQIMISEGALHPRLARPTEDDFRRADCLQMILKWKGAKLDQGEYERAAIDAVDNKKNTPLHYAAASGMKACVELLVKHGGDLFAENENKDTPCDCAEKQHHKDLALNLESQMVFSRDPEAEEIEAEYAALDKREPYEGLRPQDLRRLKDMLIVETADMLQAPLFTAEALLRAHDWDREKLLEAWMSNPENCCQRSGVQMPTPPPSGYNAWDTLPSPRTPRTTRSSVTSPDEISLSPGDLDTSLCDICMCSISVFEDPVDMPCGHDFCRGCWESFLNLKIQEGEAHNIFCPAYDCFQLVPVDIIESVVSKEMDKRYLQFDIKAFVENNPAIKWCPTPGCDRAVRLTKQGSNTSGSDTLSFPLLRAPAVDCGKGHLFCWECLGEAHEPCDCQTWKNWLQKITEMKPEELVGVSEAYEDAANCLWLLTNSKPCANCKSPIQKNEGCNHMQCAKCKYDFCWICLEEWKKHSSSTGGYYRCTRYEVIQHVEEQSKEMTVEAEKKHKRFQELDRFMHYYTRFKNHEHSYQLEQRLLKTAKEKMEQLSRALKETEGGCPDTTFIEDAVHVLLKTRRILKCSYPYGFFLEPKSTKKEIFELMQTDLEMVTEDLAQKVNRPYLRTPRHKIIKAACLVQQKRQEFLASVARGVAPADSPEAPRRSFAGGTWDWEYLGFASPEEYAEFQYRRRHRQRRRGDVHSLLSNPPDPDEPSESTLDIPEGGSSSRRPGTSVVSSASMSVLHSSSLRDYTPASRSENQDSLQALSSLDEDDPNILLAIQLSLQESGLALDEETRDFLSNEASLGAIGTSLPSRLDSVPRNTDSPRAALSSSELLELGDSLMRLGAENDPFSTDTLSSHPLSEARSDFCPSSSDPDSAGQDPNINDNLLGNIMAWFHDMNPQSIALIPPATTEISADSQLPCIKDGSEGVKDVELVLPEDSMFEDASVSEGRGTQIEENPLEENILAGEAASQAGDSGNEAANRGDGSDVSSQTPQTSSDWLEQVHLV.

Gly2 carries the N-myristoyl glycine lipid modification. 2 ANK repeats span residues 45–74 (QHNTPLHYAARHGMNKILGTFLGRDGNPNK) and 144–173 (KKNTPLHYAAASGMKACVELLVKHGGDLFA). The disordered stretch occupies residues 281–321 (CQRSGVQMPTPPPSGYNAWDTLPSPRTPRTTRSSVTSPDEI). Positions 303 to 318 (PSPRTPRTTRSSVTSP) are enriched in low complexity. The segment at 329 to 569 (DTSLCDICMC…GGYYRCTRYE (241 aa)) is TRIAD supradomain. Residues Cys333, Cys336, Cys351, His353, Cys356, Cys359, Cys378, Cys383, Cys465, Cys468, His473, Cys478, Cys519, and Cys522 each contribute to the Zn(2+) site. An RING-type 1 zinc finger spans residues 333-383 (CDICMCSISVFEDPVDMPCGHDFCRGCWESFLNLKIQEGEAHNIFCPAYDC). The IBR-type zinc-finger motif lies at 401–478 (DKRYLQFDIK…LGEAHEPCDC (78 aa)). Residues 519–548 (CANCKSPIQKNEGCNHMQCAKCKYDFCWIC) form an RING-type 2; atypical zinc finger. Residue Cys532 is part of the active site. Positions 537, 540, 545, 548, 555, and 565 each coordinate Zn(2+). Residues 575–640 (EEQSKEMTVE…RALKETEGGC (66 aa)) adopt a coiled-coil conformation. Position 737 is a phosphoserine (Ser737). Positions 776-821 (RRGDVHSLLSNPPDPDEPSESTLDIPEGGSSSRRPGTSVVSSASMS) are disordered. A UIM domain is found at 851–870 (EDDPNILLAIQLSLQESGLA). Ser884 and Ser911 each carry phosphoserine. Disordered regions lie at residues 889–912 (GTSLPSRLDSVPRNTDSPRAALSS), 927–964 (AENDPFSTDTLSSHPLSEARSDFCPSSSDPDSAGQDPN), and 1026–1089 (DASV…VHLV). Composition is skewed to polar residues over residues 931–941 (PFSTDTLSSHP) and 1070–1082 (DVSSQTPQTSSDW).

It belongs to the RBR family.

The enzyme catalyses [E2 ubiquitin-conjugating enzyme]-S-ubiquitinyl-L-cysteine + [acceptor protein]-L-lysine = [E2 ubiquitin-conjugating enzyme]-L-cysteine + [acceptor protein]-N(6)-ubiquitinyl-L-lysine.. Might act as an E3 ubiquitin-protein ligase, or as part of E3 complex, which accepts ubiquitin from specific E2 ubiquitin-conjugating enzymes and then transfers it to substrates. In Homo sapiens (Human), this protein is Ankyrin repeat and IBR domain-containing protein 1 (ANKIB1).